Consider the following 418-residue polypeptide: Major capsid protein (418 aa).

In terms of assembly, multimerizes.

Its subcellular location is the virion. In terms of biological role, the most highly expressed virion protein; probably the major capsid protein. The polypeptide is Major capsid protein (Pseudomonas phage PaMx41).